A 927-amino-acid polypeptide reads, in one-letter code: DNA mismatch repair protein MutS (927 aa).

646–653 (GPNMAGKS) is an ATP binding site. Positions 904 to 927 (SAQPGSAEQGESPDKHDEGKNSRG) are disordered. Basic and acidic residues predominate over residues 915-927 (SPDKHDEGKNSRG).

It belongs to the DNA mismatch repair MutS family.

Functionally, this protein is involved in the repair of mismatches in DNA. It is possible that it carries out the mismatch recognition step. This protein has a weak ATPase activity. This is DNA mismatch repair protein MutS from Desulfovibrio desulfuricans (strain ATCC 27774 / DSM 6949 / MB).